A 327-amino-acid polypeptide reads, in one-letter code: Gamma-gliadin (327 aa).

The N-terminal stretch at 1 to 19 (MKTLLILTILAMAITIGTA) is a signal peptide. The segment covering 42 to 81 (QPLSQQPQQTFPQPQQTFPHQPQQQVPQPQQPQQPFLQPQ) has biased composition (low complexity). The tract at residues 42–169 (QPLSQQPQQT…QPQQSFPQQQ (128 aa)) is disordered. Composition is skewed to pro residues over residues 82 to 91 (QPFPQQPQQP), 100 to 109 (QPFPQQPQQP), and 118 to 127 (QPFPQQPQQP). Residues 128–169 (FPQTQQPQQPFPQLQQPQQPFPQPQQQLPQPQQPQQSFPQQQ) show a composition bias toward low complexity.

The protein belongs to the gliadin/glutenin family.

Functionally, gliadin is the major seed storage protein in wheat. In Triticum aestivum (Wheat), this protein is Gamma-gliadin.